The chain runs to 303 residues: Taste receptor type 2 member 13 (303 aa).

Residues 1-7 (MKSALPS) lie on the Extracellular side of the membrane. The helical transmembrane segment at 8 to 28 (IFTLVIIAEFIIGNLSNGFIV) threads the bilayer. At 29-55 (LINCIDWVSKRELSSVDKLLIILAISR) the chain is on the cytoplasmic side. Residues 56 to 76 (IGLIWEILVSWFLALHYLAIF) traverse the membrane as a helical segment. The Extracellular segment spans residues 77-85 (VSGTGLRIM). A helical membrane pass occupies residues 86–106 (IFSWIVSNHFNLWLATILSIF). Residues 107–128 (YLLKIASFSSPAFLYLKWRVNK) are Cytoplasmic-facing. The helical transmembrane segment at 129-149 (VILLILLGTLVFLFLNLIQIN) threads the bilayer. The Extracellular segment spans residues 150–184 (MHIKDWLDRYERNTTWNFSMSDFETFSVSVKFTMT). 2 N-linked (GlcNAc...) asparagine glycosylation sites follow: asparagine 162 and asparagine 166. Residues 185–205 (MFSLTPFTVAFISFLLLIFSL) form a helical membrane-spanning segment. At 206–232 (QKHLQKMQLNYKGHRDPKTKVHTNALK) the chain is on the cytoplasmic side. The chain crosses the membrane as a helical span at residues 233–253 (IVISFLLFYASFFLCVLXSWI). Topologically, residues 254 to 261 (SELYQNTV) are extracellular. The helical transmembrane segment at 262–282 (IYMLCETIGVFYPSSHSFLLI) threads the bilayer. Topologically, residues 283–303 (LGNAKLRQAFLLVAAKVWAKR) are cytoplasmic.

The protein belongs to the G-protein coupled receptor T2R family.

The protein localises to the membrane. Its function is as follows. Receptor that may play a role in the perception of bitterness and is gustducin-linked. May play a role in sensing the chemical composition of the gastrointestinal content. The activity of this receptor may stimulate alpha gustducin, mediate PLC-beta-2 activation and lead to the gating of TRPM5. The protein is Taste receptor type 2 member 13 (TAS2R13) of Gorilla gorilla gorilla (Western lowland gorilla).